Reading from the N-terminus, the 373-residue chain is UPF0725 protein At1g23950 (373 aa).

Threonine 2 is subject to N-acetylthreonine.

The protein belongs to the UPF0725 (EMB2204) family.

In Arabidopsis thaliana (Mouse-ear cress), this protein is UPF0725 protein At1g23950.